We begin with the raw amino-acid sequence, 292 residues long: Diaminopimelate epimerase (292 aa).

Substrate is bound by residues Asn-13, Gln-46, and Asn-66. The Proton donor role is filled by Cys-75. Substrate contacts are provided by residues Gly-76–Asn-77, Asn-166, Asn-199, and Glu-217–Arg-218. The active-site Proton acceptor is Cys-226. Gly-227–Thr-228 is a substrate binding site.

It belongs to the diaminopimelate epimerase family. Homodimer.

The protein localises to the cytoplasm. It carries out the reaction (2S,6S)-2,6-diaminopimelate = meso-2,6-diaminopimelate. It functions in the pathway amino-acid biosynthesis; L-lysine biosynthesis via DAP pathway; DL-2,6-diaminopimelate from LL-2,6-diaminopimelate: step 1/1. In terms of biological role, catalyzes the stereoinversion of LL-2,6-diaminopimelate (L,L-DAP) to meso-diaminopimelate (meso-DAP), a precursor of L-lysine and an essential component of the bacterial peptidoglycan. In Ralstonia pickettii (strain 12J), this protein is Diaminopimelate epimerase.